Reading from the N-terminus, the 233-residue chain is DNA repair protein RecO (233 aa).

This sequence belongs to the RecO family.

Functionally, involved in DNA repair and RecF pathway recombination. This is DNA repair protein RecO from Pseudomonas aeruginosa (strain UCBPP-PA14).